A 393-amino-acid chain; its full sequence is Formate-dependent phosphoribosylglycinamide formyltransferase (393 aa).

Residues 22–23 (EL) and E82 each bind N(1)-(5-phospho-beta-D-ribosyl)glycinamide. Residues R114, K155, 160–165 (SSGKGQ), 195–198 (EGFI), and E203 each bind ATP. The ATP-grasp domain maps to 119 to 308 (RLAAEELGLP…EFALHARAIL (190 aa)). Residues E267 and E279 each coordinate Mg(2+). Residues D286, K356, and 363–364 (RR) each bind N(1)-(5-phospho-beta-D-ribosyl)glycinamide.

This sequence belongs to the PurK/PurT family. Homodimer.

It catalyses the reaction N(1)-(5-phospho-beta-D-ribosyl)glycinamide + formate + ATP = N(2)-formyl-N(1)-(5-phospho-beta-D-ribosyl)glycinamide + ADP + phosphate + H(+). The protein operates within purine metabolism; IMP biosynthesis via de novo pathway; N(2)-formyl-N(1)-(5-phospho-D-ribosyl)glycinamide from N(1)-(5-phospho-D-ribosyl)glycinamide (formate route): step 1/1. Functionally, involved in the de novo purine biosynthesis. Catalyzes the transfer of formate to 5-phospho-ribosyl-glycinamide (GAR), producing 5-phospho-ribosyl-N-formylglycinamide (FGAR). Formate is provided by PurU via hydrolysis of 10-formyl-tetrahydrofolate. This Azoarcus sp. (strain BH72) protein is Formate-dependent phosphoribosylglycinamide formyltransferase.